Here is a 371-residue protein sequence, read N- to C-terminus: Putative F-box/kelch-repeat protein At3g10510 (371 aa).

The F-box domain occupies 13–61 (SVMTSIPDDVIMECIAPRVPRYNHSMLSLVSKQFRSLVASPRLYKTRSL). Kelch repeat units lie at residues 123–165 (NIFV…DMPV), 178–229 (KIYI…GPSS), and 257–305 (NECV…YIVS).

The chain is Putative F-box/kelch-repeat protein At3g10510 from Arabidopsis thaliana (Mouse-ear cress).